Consider the following 382-residue polypeptide: S-adenosylmethionine synthase (382 aa).

Histidine 15 is a binding site for ATP. Aspartate 17 contributes to the Mg(2+) binding site. Glutamate 43 contributes to the K(+) binding site. Positions 56 and 99 each coordinate L-methionine. The flexible loop stretch occupies residues glutamine 99–arginine 109. Residues aspartate 164–lysine 166, arginine 230–phenylalanine 231, aspartate 239, arginine 245–lysine 246, alanine 262, and lysine 266 contribute to the ATP site. Aspartate 239 is an L-methionine binding site. Lysine 270 is an L-methionine binding site.

It belongs to the AdoMet synthase family. In terms of assembly, homotetramer; dimer of dimers. It depends on Mg(2+) as a cofactor. K(+) is required as a cofactor.

The protein resides in the cytoplasm. It carries out the reaction L-methionine + ATP + H2O = S-adenosyl-L-methionine + phosphate + diphosphate. It participates in amino-acid biosynthesis; S-adenosyl-L-methionine biosynthesis; S-adenosyl-L-methionine from L-methionine: step 1/1. Its function is as follows. Catalyzes the formation of S-adenosylmethionine (AdoMet) from methionine and ATP. The overall synthetic reaction is composed of two sequential steps, AdoMet formation and the subsequent tripolyphosphate hydrolysis which occurs prior to release of AdoMet from the enzyme. This chain is S-adenosylmethionine synthase, found in Psychromonas ingrahamii (strain DSM 17664 / CCUG 51855 / 37).